The chain runs to 369 residues: Actin-related protein T3 (369 aa).

Belongs to the actin family. In terms of assembly, interacts with PFN3. Testis specific (at protein level). Expressed specifically in haploid germ cells.

Its subcellular location is the cytoplasm. It is found in the cytoskeleton. The protein localises to the nucleus. The polypeptide is Actin-related protein T3 (Actrt3) (Mus musculus (Mouse)).